The chain runs to 201 residues: 3-isopropylmalate dehydratase small subunit (201 aa).

The protein belongs to the LeuD family. LeuD type 1 subfamily. Heterodimer of LeuC and LeuD.

The enzyme catalyses (2R,3S)-3-isopropylmalate = (2S)-2-isopropylmalate. It functions in the pathway amino-acid biosynthesis; L-leucine biosynthesis; L-leucine from 3-methyl-2-oxobutanoate: step 2/4. Functionally, catalyzes the isomerization between 2-isopropylmalate and 3-isopropylmalate, via the formation of 2-isopropylmaleate. This chain is 3-isopropylmalate dehydratase small subunit, found in Escherichia coli O157:H7.